The following is a 176-amino-acid chain: Ribosome maturation factor RimM (176 aa).

The 73-residue stretch at 100–172 (PDTYYDHQLV…IVEIDPPHGL (73 aa)) folds into the PRC barrel domain.

This sequence belongs to the RimM family. Binds ribosomal protein uS19.

The protein resides in the cytoplasm. Functionally, an accessory protein needed during the final step in the assembly of 30S ribosomal subunit, possibly for assembly of the head region. Essential for efficient processing of 16S rRNA. May be needed both before and after RbfA during the maturation of 16S rRNA. It has affinity for free ribosomal 30S subunits but not for 70S ribosomes. The polypeptide is Ribosome maturation factor RimM (Mycobacterium bovis (strain ATCC BAA-935 / AF2122/97)).